A 452-amino-acid polypeptide reads, in one-letter code: Tripartite motif-containing protein 51G (452 aa).

Residues Cys-15–Lys-56 form an RING-type zinc finger. The segment at Ser-88–Thr-129 adopts a B box-type zinc-finger fold. Zn(2+) is bound by residues Cys-93, His-96, Cys-115, and His-121. The region spanning Glu-269–Phe-452 is the B30.2/SPRY domain.

This sequence belongs to the TRIM/RBCC family.

In Homo sapiens (Human), this protein is Tripartite motif-containing protein 51G.